The chain runs to 83 residues: Short neurotoxin II (83 aa).

Positions 1 to 21 (MKTLLLTLVVVTVVCLDLGYT) are cleaved as a signal peptide. 4 disulfide bridges follow: C24–C45, C38–C62, C64–C75, and C76–C81.

Belongs to the three-finger toxin family. Short-chain subfamily. Type I alpha-neurotoxin sub-subfamily. Expressed by the venom gland.

It localises to the secreted. Functionally, binds to muscle nicotinic acetylcholine receptor (nAChR) and inhibit acetylcholine from binding to the receptor, thereby impairing neuromuscular transmission. In Laticauda colubrina (Yellow-lipped sea krait), this protein is Short neurotoxin II.